Here is a 449-residue protein sequence, read N- to C-terminus: UDP-N-acetylmuramoylalanine--D-glutamate ligase (449 aa).

118–124 is a binding site for ATP; that stretch reads GTNGKTT.

Belongs to the MurCDEF family.

The protein localises to the cytoplasm. The catalysed reaction is UDP-N-acetyl-alpha-D-muramoyl-L-alanine + D-glutamate + ATP = UDP-N-acetyl-alpha-D-muramoyl-L-alanyl-D-glutamate + ADP + phosphate + H(+). It functions in the pathway cell wall biogenesis; peptidoglycan biosynthesis. Its function is as follows. Cell wall formation. Catalyzes the addition of glutamate to the nucleotide precursor UDP-N-acetylmuramoyl-L-alanine (UMA). This Staphylococcus aureus (strain MSSA476) protein is UDP-N-acetylmuramoylalanine--D-glutamate ligase.